Consider the following 728-residue polypeptide: Catalase-peroxidase (728 aa).

The first 19 residues, 1-19, serve as a signal peptide directing secretion; sequence MSTEAKCPVTGGATRSSSA. Residues 1–20 form a disordered region; sequence MSTEAKCPVTGGATRSSSAG. A cross-link (tryptophyl-tyrosyl-methioninium (Trp-Tyr) (with M-245)) is located at residues 96-219; sequence WHAAGTYRIG…LAAVQMGLIY (124 aa). H97 acts as the Proton acceptor in catalysis. A cross-link (tryptophyl-tyrosyl-methioninium (Tyr-Met) (with W-96)) is located at residues 219 to 245; the sequence is YVNPEGPNGKPDPVAAARDIRETFARM. H260 provides a ligand contact to heme b.

Belongs to the peroxidase family. Peroxidase/catalase subfamily. Homodimer or homotetramer. It depends on heme b as a cofactor. Formation of the three residue Trp-Tyr-Met cross-link is important for the catalase, but not the peroxidase activity of the enzyme.

The catalysed reaction is H2O2 + AH2 = A + 2 H2O. The enzyme catalyses 2 H2O2 = O2 + 2 H2O. Bifunctional enzyme with both catalase and broad-spectrum peroxidase activity. The protein is Catalase-peroxidase of Acidiphilium cryptum (strain JF-5).